The sequence spans 402 residues: Tyrosine--tRNA ligase (402 aa).

A 'HIGH' region motif is present at residues 48-57 (PSRPDLHLGH). Positions 232–236 (KMSKS) match the 'KMSKS' region motif. ATP is bound at residue lysine 235. The S4 RNA-binding domain maps to 339–402 (MPIIDLLTLL…KRKFFKIRSK (64 aa)).

The protein belongs to the class-I aminoacyl-tRNA synthetase family. TyrS type 2 subfamily. Homodimer.

The protein resides in the cytoplasm. It catalyses the reaction tRNA(Tyr) + L-tyrosine + ATP = L-tyrosyl-tRNA(Tyr) + AMP + diphosphate + H(+). Catalyzes the attachment of tyrosine to tRNA(Tyr) in a two-step reaction: tyrosine is first activated by ATP to form Tyr-AMP and then transferred to the acceptor end of tRNA(Tyr). This is Tyrosine--tRNA ligase from Chlorobium chlorochromatii (strain CaD3).